We begin with the raw amino-acid sequence, 60 residues long: Large ribosomal subunit protein bL32 (60 aa).

Belongs to the bacterial ribosomal protein bL32 family.

The protein is Large ribosomal subunit protein bL32 of Oenococcus oeni (strain ATCC BAA-331 / PSU-1).